The primary structure comprises 257 residues: UPF0246 protein SO_3540 (257 aa).

It belongs to the UPF0246 family.

This is UPF0246 protein SO_3540 from Shewanella oneidensis (strain ATCC 700550 / JCM 31522 / CIP 106686 / LMG 19005 / NCIMB 14063 / MR-1).